Consider the following 272-residue polypeptide: Elongation factor Ts (272 aa).

The tract at residues 76-79 is involved in Mg(2+) ion dislocation from EF-Tu; the sequence is TDFV.

This sequence belongs to the EF-Ts family.

The protein resides in the cytoplasm. In terms of biological role, associates with the EF-Tu.GDP complex and induces the exchange of GDP to GTP. It remains bound to the aminoacyl-tRNA.EF-Tu.GTP complex up to the GTP hydrolysis stage on the ribosome. The sequence is that of Elongation factor Ts from Corynebacterium jeikeium (strain K411).